A 430-amino-acid chain; its full sequence is Histidine--tRNA ligase (430 aa).

It belongs to the class-II aminoacyl-tRNA synthetase family. In terms of assembly, homodimer.

It is found in the cytoplasm. The enzyme catalyses tRNA(His) + L-histidine + ATP = L-histidyl-tRNA(His) + AMP + diphosphate + H(+). The chain is Histidine--tRNA ligase from Chlamydia caviae (strain ATCC VR-813 / DSM 19441 / 03DC25 / GPIC) (Chlamydophila caviae).